The chain runs to 465 residues: 2-methylcitrate synthase, mitochondrial (465 aa).

2 residues coordinate CoA: arginine 72 and lysine 190. Histidine 265 lines the oxaloacetate pocket. Leucine 300 provides a ligand contact to CoA. Residue histidine 301 is part of the active site. CoA contacts are provided by valine 342, glycine 344, and tyrosine 345. Oxaloacetate contacts are provided by histidine 347 and arginine 356. Residue histidine 347 is part of the active site. Residues threonine 394, lysine 395, and asparagine 400 each contribute to the CoA site. Aspartate 402 is a catalytic residue. 2 residues coordinate oxaloacetate: arginine 428 and arginine 448.

This sequence belongs to the citrate synthase family. Homodimer.

Its subcellular location is the mitochondrion matrix. The enzyme catalyses propanoyl-CoA + oxaloacetate + H2O = (2S,3S)-2-methylcitrate + CoA + H(+). The catalysed reaction is oxaloacetate + acetyl-CoA + H2O = citrate + CoA + H(+). Its pathway is organic acid metabolism; propanoate degradation. Its activity is regulated as follows. Activity is inhibited by p-chloromercuribenzoate (pCMB), monoiodoacetamide, H(2)O(2), ATP, ADP, NADH, NADPH, Hg(2+) and Zn(2+). Functionally, component of the methylcitrate cycle that catalyzes the synthesis of (2S,3S)-2-methylcitrate from propionyl-CoA and oxaloacetate. Plays an important role in detoxification of propionyl-CoA, an inhibitor of both primary and secondary metabolism. Also has citrate synthase activity using as substrates acetyl-CoA and oxaloacetate. The chain is 2-methylcitrate synthase, mitochondrial from Yarrowia lipolytica (strain CLIB 122 / E 150) (Yeast).